Here is an 80-residue protein sequence, read N- to C-terminus: Waprin-Phi3 (80 aa).

Positions 1 to 22 (MKPWILLLLAGLLILSTQLTTA) are cleaved as a signal peptide. The WAP domain maps to 31-78 (PKVKPGECPKVKIPPDYPCNQYCVWDFDCEGNKKCCPVGCAKECFPPG). Disulfide bonds link C38–C66, C49–C70, C53–C65, and C59–C74.

It belongs to the venom waprin family. As to expression, expressed by the venom gland.

The protein localises to the secreted. Damages membranes of susceptible bacteria. Has no hemolytic activity. Not toxic to mice. Does not inhibit the proteinases elastase and cathepsin G. This is Waprin-Phi3 from Philodryas olfersii (Green snake).